Here is a 246-residue protein sequence, read N- to C-terminus: Phosphomannomutase 2 (246 aa).

N-acetylalanine is present on alanine 2. The Nucleophile role is filled by aspartate 12. Mg(2+) is bound by residues aspartate 12 and aspartate 14. Aspartate 14 serves as the catalytic Proton donor/acceptor. Alpha-D-mannose 1-phosphate is bound by residues arginine 21, arginine 123, arginine 134, and arginine 141. N6-acetyllysine is present on lysine 149. Residues serine 179 and aspartate 181 each contribute to the alpha-D-mannose 1-phosphate site. The Mg(2+) site is built by aspartate 209, phenylalanine 221, aspartate 223, and threonine 226.

The protein belongs to the eukaryotic PMM family. In terms of assembly, homodimer.

The protein resides in the cytoplasm. It catalyses the reaction alpha-D-mannose 1-phosphate = D-mannose 6-phosphate. The protein operates within nucleotide-sugar biosynthesis; GDP-alpha-D-mannose biosynthesis; alpha-D-mannose 1-phosphate from D-fructose 6-phosphate: step 2/2. In terms of biological role, involved in the synthesis of the GDP-mannose and dolichol-phosphate-mannose required for a number of critical mannosyl transfer reactions. The polypeptide is Phosphomannomutase 2 (PMM2) (Macaca fascicularis (Crab-eating macaque)).